The sequence spans 178 residues: Large ribosomal subunit protein uL13m (178 aa).

Position 2 is an N-acetylserine (Ser2).

It belongs to the universal ribosomal protein uL13 family. Component of the mitochondrial large ribosomal subunit (mt-LSU). Mature mammalian 55S mitochondrial ribosomes consist of a small (28S) and a large (39S) subunit. The 28S small subunit contains a 12S ribosomal RNA (12S mt-rRNA) and 30 different proteins. The 39S large subunit contains a 16S rRNA (16S mt-rRNA), a copy of mitochondrial valine transfer RNA (mt-tRNA(Val)), which plays an integral structural role, and 52 different proteins. Interacts with OXA1L.

Its subcellular location is the mitochondrion. The sequence is that of Large ribosomal subunit protein uL13m (MRPL13) from Homo sapiens (Human).